The following is a 314-amino-acid chain: Leucotoxin LukE (314 aa).

A signal peptide spans 1–28 (MFKKKMLAASLSVGLIAPLASPIQESRA).

It belongs to the aerolysin family. As to quaternary structure, toxicity requires sequential binding and synergistic association of a class S and a class F component which form heterooligomeric complexes. LukE (class S) associates with LukD (class F). LukE can also associate with HlgB.

The protein resides in the secreted. Part of a bi-component leucotoxin that acts by forming pores in the membrane of the target cells. LukE-LukD is as effective as the Panton-Valentine leucocidin (PVL) for inducing dermonecrosis when injected in the rabbit skin, but not hemolytic and poorly leucotoxic on human blood cells compared to other leucotoxins expressed by S.aureus. This Staphylococcus aureus protein is Leucotoxin LukE (lukE).